A 109-amino-acid chain; its full sequence is Putative double-stranded DNA mimic protein YciU (109 aa).

Belongs to the putative dsDNA mimic protein family.

Its function is as follows. May act as a double-stranded DNA (dsDNA) mimic. Probably regulates the activity of a dsDNA-binding protein. The polypeptide is Putative double-stranded DNA mimic protein YciU (Shigella boydii serotype 18 (strain CDC 3083-94 / BS512)).